A 470-amino-acid polypeptide reads, in one-letter code: MCDKADNHIDVQPEGNLEVSSVSSTRLYRRRWVILLLFSSYSLCNAFQWIQYGIINNIFMKFYQVSSFAVDWLSMVYMLTYIPFIFPVTWLLERKGLRVVALLAASINCAGTWIKVASVQPSLFWVTMLGQFACSCAQVFILGMPSQVASVWFGSDEVSTACAIGVFGNQLGIAIGFLVPPVLVPNVEDMGELAEHISIMFYITAAVATLIFLLVVFVFQEKPETPPSLAQVALRNMPTGQHSYLASIARLMCNKPFILLLISYGLNVGSFYAVSTLLNRMIIEHYPGEEVNAGRIGLTLVVAGVVGSLICGVWLDKTKTYKQTTLSVYLLSFVGMLIYSFTLNLGHLWLVFLTSGVLGFFMTGYLPLGFEFAVELTYPESEGTSSGLLNCSAQVFGIAFTIIQGKIIDHFGTLAGNIFLCVFLLIGSIMTAFIKSDLRRQKANQETGGNADSSVHPQHGETLPVKEVKM.

At 1–23 the chain is on the cytoplasmic side; sequence MCDKADNHIDVQPEGNLEVSSVS. The chain crosses the membrane as a helical span at residues 24–48; sequence STRLYRRRWVILLLFSSYSLCNAFQ. Positions 45, 46, and 49 each coordinate choline. At 49-66 the chain is on the extracellular side; it reads WIQYGIINNIFMKFYQVS. Residues 67–94 form a helical membrane-spanning segment; sequence SFAVDWLSMVYMLTYIPFIFPVTWLLER. At 95-96 the chain is on the cytoplasmic side; that stretch reads KG. The helical transmembrane segment at 97–116 threads the bilayer; that stretch reads LRVVALLAASINCAGTWIKV. Over 117 to 123 the chain is Extracellular; that stretch reads ASVQPSL. A helical transmembrane segment spans residues 124 to 152; sequence FWVTMLGQFACSCAQVFILGMPSQVASVW. Gln-138 and Leu-142 together coordinate choline. Residues 153–157 lie on the Cytoplasmic side of the membrane; sequence FGSDE. A helical membrane pass occupies residues 158-183; it reads VSTACAIGVFGNQLGIAIGFLVPPVL. Topologically, residues 184–188 are extracellular; that stretch reads VPNVE. The helical transmembrane segment at 189–218 threads the bilayer; it reads DMGELAEHISIMFYITAAVATLIFLLVVFV. Topologically, residues 219–254 are cytoplasmic; the sequence is FQEKPETPPSLAQVALRNMPTGQHSYLASIARLMCN. The chain crosses the membrane as a helical span at residues 255–285; it reads KPFILLLISYGLNVGSFYAVSTLLNRMIIEH. Tyr-272 contributes to the choline binding site. Residues 286–289 lie on the Extracellular side of the membrane; it reads YPGE. A helical membrane pass occupies residues 290 to 318; it reads EVNAGRIGLTLVVAGVVGSLICGVWLDKT. The Cytoplasmic portion of the chain corresponds to 319–320; that stretch reads KT. The helical transmembrane segment at 321–343 threads the bilayer; sequence YKQTTLSVYLLSFVGMLIYSFTL. The Extracellular portion of the chain corresponds to 344-346; that stretch reads NLG. The chain crosses the membrane as a helical span at residues 347–376; it reads HLWLVFLTSGVLGFFMTGYLPLGFEFAVEL. The Cytoplasmic portion of the chain corresponds to 377–384; it reads TYPESEGT. The helical transmembrane segment at 385–410 threads the bilayer; it reads SSGLLNCSAQVFGIAFTIIQGKIIDH. Gln-394 contacts choline. Residues 411–412 are Extracellular-facing; sequence FG. Residues 413–435 form a helical membrane-spanning segment; that stretch reads TLAGNIFLCVFLLIGSIMTAFIK. Residues 436-470 are Cytoplasmic-facing; the sequence is SDLRRQKANQETGGNADSSVHPQHGETLPVKEVKM. Residues 445 to 456 show a composition bias toward polar residues; the sequence is QETGGNADSSVH. Residues 445 to 470 are disordered; that stretch reads QETGGNADSSVHPQHGETLPVKEVKM.

It belongs to the major facilitator superfamily. Feline leukemia virus subgroup C receptor (TC 2.A.1.28.1) family.

The protein resides in the cell membrane. It is found in the mitochondrion membrane. Its subcellular location is the endoplasmic reticulum membrane. The catalysed reaction is choline(out) = choline(in). The enzyme catalyses ethanolamine(in) = ethanolamine(out). It catalyses the reaction heme b(in) = heme b(out). In terms of biological role, choline uniporter that specifically mediates choline uptake at the blood-brain-barrier. Responsible for the majority of choline uptake across the blood-brain-barrier from the circulation into the brain. Choline, a nutrient critical for brain development, is a precursor of phosphatidylcholine, as well as betaine. Also mediates transport of ethanolamine. Choline and ethanolamine transport is not coupled with proton transport and is exclusively driven by the choline gradient across the plasma membrane. Also acts as a heme b transporter. In Danio rerio (Zebrafish), this protein is Choline/ethanolamine transporter flvcr2a.